Reading from the N-terminus, the 221-residue chain is 7-cyano-7-deazaguanine synthase (221 aa).

7 to 17 (LSGGMDSSTLA) contributes to the ATP binding site. Positions 187, 195, 198, and 201 each coordinate Zn(2+).

It belongs to the QueC family. Zn(2+) is required as a cofactor.

The catalysed reaction is 7-carboxy-7-deazaguanine + NH4(+) + ATP = 7-cyano-7-deazaguanine + ADP + phosphate + H2O + H(+). It functions in the pathway purine metabolism; 7-cyano-7-deazaguanine biosynthesis. In terms of biological role, catalyzes the ATP-dependent conversion of 7-carboxy-7-deazaguanine (CDG) to 7-cyano-7-deazaguanine (preQ(0)). This chain is 7-cyano-7-deazaguanine synthase, found in Methanosphaerula palustris (strain ATCC BAA-1556 / DSM 19958 / E1-9c).